Here is a 497-residue protein sequence, read N- to C-terminus: Probable cytosol aminopeptidase (497 aa).

The Mn(2+) site is built by Lys-264 and Asp-269. Lys-276 is a catalytic residue. Mn(2+) is bound by residues Asp-287, Asp-346, and Glu-348. Residue Arg-350 is part of the active site.

It belongs to the peptidase M17 family. Requires Mn(2+) as cofactor.

It localises to the cytoplasm. It carries out the reaction Release of an N-terminal amino acid, Xaa-|-Yaa-, in which Xaa is preferably Leu, but may be other amino acids including Pro although not Arg or Lys, and Yaa may be Pro. Amino acid amides and methyl esters are also readily hydrolyzed, but rates on arylamides are exceedingly low.. It catalyses the reaction Release of an N-terminal amino acid, preferentially leucine, but not glutamic or aspartic acids.. In terms of biological role, presumably involved in the processing and regular turnover of intracellular proteins. Catalyzes the removal of unsubstituted N-terminal amino acids from various peptides. The chain is Probable cytosol aminopeptidase from Persephonella marina (strain DSM 14350 / EX-H1).